The sequence spans 322 residues: Probable L-asparaginase (322 aa).

An Asparaginase/glutaminase domain is found at 6–320 (PRLALIHTGG…EDIRRVFTQG (315 aa)). A disordered region spans residues 13–37 (TGGTIASRPSPDGRGLTPQTPPALP). T16 serves as the catalytic O-isoaspartyl threonine intermediate. Substrate-binding positions include S54 and 85–86 (TD).

This sequence belongs to the asparaginase 1 family.

It is found in the cytoplasm. It carries out the reaction L-asparagine + H2O = L-aspartate + NH4(+). In Deinococcus radiodurans (strain ATCC 13939 / DSM 20539 / JCM 16871 / CCUG 27074 / LMG 4051 / NBRC 15346 / NCIMB 9279 / VKM B-1422 / R1), this protein is Probable L-asparaginase (ansA).